A 107-amino-acid chain; its full sequence is Integration host factor subunit beta (107 aa).

The segment at 54 to 107 (NRRPARVGRNPKSGEKVQVPEKHVPHFKPGKELRERVDGRAGEPLKNDEPEDGQ) is disordered. Residues 65-101 (KSGEKVQVPEKHVPHFKPGKELRERVDGRAGEPLKND) are compositionally biased toward basic and acidic residues.

Belongs to the bacterial histone-like protein family. As to quaternary structure, heterodimer of an alpha and a beta chain.

Functionally, this protein is one of the two subunits of integration host factor, a specific DNA-binding protein that functions in genetic recombination as well as in transcriptional and translational control. The polypeptide is Integration host factor subunit beta (Burkholderia thailandensis (strain ATCC 700388 / DSM 13276 / CCUG 48851 / CIP 106301 / E264)).